A 347-amino-acid chain; its full sequence is Selenide, water dikinase (347 aa).

Cys-17 is a catalytic residue. ATP contacts are provided by residues Lys-20 and 48–50; that span reads TRD. Asp-51 is a Mg(2+) binding site. ATP-binding positions include Asp-68, Asp-91, and 139-141; that span reads GHS. Residue Asp-91 coordinates Mg(2+). Asp-227 is a binding site for Mg(2+).

It belongs to the selenophosphate synthase 1 family. Class I subfamily. Homodimer. It depends on Mg(2+) as a cofactor.

The enzyme catalyses hydrogenselenide + ATP + H2O = selenophosphate + AMP + phosphate + 2 H(+). Synthesizes selenophosphate from selenide and ATP. This is Selenide, water dikinase from Enterobacter sp. (strain 638).